The following is a 609-amino-acid chain: Protein NRT1/ PTR FAMILY 7.1 (609 aa).

2 helical membrane-spanning segments follow: residues 67–87 (IILL…GVNL) and 109–129 (WTGT…SYWG). At T133 the chain carries Phosphothreonine. The next 10 membrane-spanning stretches (helical) occupy residues 136–156 (IFQV…WFFL), 173–193 (SSLG…GYGG), 216–236 (FFSY…TILV), 243–263 (LWTE…VAFL), 367–387 (PIWL…SLFV), 402–422 (IPAA…TGIY), 438–458 (MGIG…TEIQ), 474–494 (ILWQ…MYVG), 516–536 (MASM…VMAI), and 559–579 (FYFL…IFAK).

It belongs to the major facilitator superfamily. Proton-dependent oligopeptide transporter (POT/PTR) (TC 2.A.17) family. In terms of tissue distribution, expressed in flowers.

The protein resides in the membrane. This Arabidopsis thaliana (Mouse-ear cress) protein is Protein NRT1/ PTR FAMILY 7.1 (NPF7.1).